A 447-amino-acid polypeptide reads, in one-letter code: Mannose/glucose-specific lectin (447 aa).

3 consecutive repeat copies span residues 1 to 149 (SLKG…VQPV), 150 to 295 (PHGT…VKPR), and 296 to 447 (DVEG…DTAV). A 3 X approximate tandem repeats region spans residues 1–447 (SLKGMISVGP…GIFVKPDTAV (447 aa)). Jacalin-type lectin domains follow at residues 5–148 (MISV…FVQP), 153–294 (TISF…YVKP), and 300–443 (SISI…FVKP).

It belongs to the jacalin lectin family. Homodimer. In terms of processing, the N-terminus is blocked.

Functionally, mannose/glucose specific lectin. Shows agglutinating activity against rabbit erythrocytes. The chain is Mannose/glucose-specific lectin from Parkia platycephala.